The sequence spans 205 residues: Outer-membrane lipoprotein carrier protein (205 aa).

Residues 1–19 form the signal peptide; the sequence is MKKIIICFIFVFSINVSFA.

It belongs to the LolA family. As to quaternary structure, monomer.

The protein resides in the periplasm. Participates in the translocation of lipoproteins from the inner membrane to the outer membrane. Only forms a complex with a lipoprotein if the residue after the N-terminal Cys is not an aspartate (The Asp acts as a targeting signal to indicate that the lipoprotein should stay in the inner membrane). In Francisella tularensis subsp. tularensis (strain FSC 198), this protein is Outer-membrane lipoprotein carrier protein.